Here is a 236-residue protein sequence, read N- to C-terminus: Small ribosomal subunit protein uS2c (236 aa).

The protein belongs to the universal ribosomal protein uS2 family.

It is found in the plastid. It localises to the chloroplast. The chain is Small ribosomal subunit protein uS2c (rps2) from Acorus calamus var. americanus (American sweet flag).